Here is a 306-residue protein sequence, read N- to C-terminus: MALIAGPTASGKSALAVALAKALGNGTVVNADASQVYADLAILSARPTDDEMQGVPHRLFGHVDGSQAHNAARWADEAQGVIAQAHAAGRVPILVGGTGLYLRTLLYGIAPVPEIDPHIREAVRALPVAQAHAALAEADPAAAARLGPADTTRVARALEVVRSTGRTLASWQQAREGGIADRVALAPLVLLPPRDWLRDRCDVRLVEMFDGGAIDEVEALLARGLDPDLPVMRAIGVPQIAAFLDGTASRDEALAAAQAATRQYAKRQFTWFRHQPPASWPRHIESLSIDIIDNLAIKLRETVLTR.

ATP is bound at residue 6-13 (GPTASGKS). 8 to 13 (TASGKS) is a binding site for substrate.

It belongs to the IPP transferase family. Monomer. The cofactor is Mg(2+).

The catalysed reaction is adenosine(37) in tRNA + dimethylallyl diphosphate = N(6)-dimethylallyladenosine(37) in tRNA + diphosphate. Catalyzes the transfer of a dimethylallyl group onto the adenine at position 37 in tRNAs that read codons beginning with uridine, leading to the formation of N6-(dimethylallyl)adenosine (i(6)A). This is tRNA dimethylallyltransferase from Sphingopyxis alaskensis (strain DSM 13593 / LMG 18877 / RB2256) (Sphingomonas alaskensis).